A 62-amino-acid chain; its full sequence is Single-pass membrane and coiled-coil domain-containing protein 4 homolog (62 aa).

The tract at residues 1–27 (MRQLPGKAAKETRKMKRERKQQNKEGH) is disordered. The stretch at 9–31 (AKETRKMKRERKQQNKEGHNRVV) forms a coiled coil. The chain crosses the membrane as a helical span at residues 30–50 (VVTVAIPVCLAVFVMLIVYVY).

The protein belongs to the SMCO4 family.

The protein resides in the membrane. The chain is Single-pass membrane and coiled-coil domain-containing protein 4 homolog from Nematostella vectensis (Starlet sea anemone).